Consider the following 526-residue polypeptide: Fumitremorgin C synthase (526 aa).

A helical membrane pass occupies residues 4–24; that stretch reads LPLSPAVLFLTITLPILYFWI. A heme-binding site is contributed by Cys-443.

The protein belongs to the cytochrome P450 family. Requires heme as cofactor.

It localises to the membrane. The catalysed reaction is tryprostatin A + reduced [NADPH--hemoprotein reductase] + O2 = fumitremorgin C + oxidized [NADPH--hemoprotein reductase] + 2 H2O + H(+). Its pathway is mycotoxin biosynthesis. Functionally, cytochrome P450 monooxygenase; part of the gene cluster that mediates the biosynthesis of fumitremorgins, indole alkaloids that carry not only intriguing chemical structures, but also interesting biological and pharmacological activities. The biosynthesis of fumitremorgin-type alkaloids begins by condensation of the two amino acids L-tryptophan and L-proline to brevianamide F, catalyzed by the non-ribosomal peptide synthetase ftmPS/ftmA. Brevianamide F is then prenylated by the prenyltransferase ftmPT1/ftmB in the presence of dimethylallyl diphosphate, resulting in the formation of tryprostatin B. The three cytochrome P450 monooxygenases, ftmP450-1/ftmC, ftmP450-2/ftmE and ftmP450-3/FtmG, are responsible for the conversion of tryprostatin B to 6-hydroxytryprostatin B, tryprostatin A to fumitremorgin C and fumitremorgin C to 12,13-dihydroxyfumitremorgin C, respectively. The putative methyltransferase ftmMT/ftmD is expected for the conversion of 6-hydroxytryprostatin B to tryprostatin A. FtmPT2/FtmH catalyzes the prenylation of 12,13-dihydroxyfumitre-morgin C in the presence of dimethylallyl diphosphate, resulting in the formation of fumitremorgin B. Fumitremorgin B is further converted to verruculogen by ftmOx1/ftmF via the insertion of an endoperoxide bond between the two prenyl moieties. Finally, verruculogen is further converted to fumitremorgin A by the verruculogen prenyltransferase ftmPT3. The chain is Fumitremorgin C synthase from Neosartorya fischeri (strain ATCC 1020 / DSM 3700 / CBS 544.65 / FGSC A1164 / JCM 1740 / NRRL 181 / WB 181) (Aspergillus fischerianus).